The sequence spans 447 residues: Putative vacuolar cation/proton exchanger 4 (447 aa).

Residues 1 to 29 (MDKSEMDKINGTNPESTDQAPSLASRPDE) form a disordered region. Residues 1–65 (MDKSEMDKIN…VNWGVFGSMK (65 aa)) lie on the Cytoplasmic side of the membrane. Over residues 10 to 22 (NGTNPESTDQAPS) the composition is skewed to polar residues. The chain crosses the membrane as a helical span at residues 66 to 86 (IVFLKSKLNVLIPCGFLAIFL). Over 87–93 (NYMTQRY) the chain is Extracellular. The helical transmembrane segment at 94–114 (GWVFPLSMLGIIPLAERLGFA) threads the bilayer. Residues 115–122 (TDWQISCE) lie on the Cytoplasmic side of the membrane. The chain crosses the membrane as a helical span at residues 123-143 (VGRLLNSAFGNATELIISIHA). The cation selection stretch occupies residues 132–167 (GNATELIISIHALSRGKLHVVQQCLLGSILSNLLLV). Residues 144–159 (LSRGKLHVVQQCLLGS) are Extracellular-facing. The helical transmembrane segment at 160–180 (ILSNLLLVLGSAFFSGGLACG) threads the bilayer. At 181 to 190 (KTMQTFSKAD) the chain is on the cytoplasmic side. A helical membrane pass occupies residues 191–211 (AVVNSGLLLMAVMGLLIPAAL). Residues 212–224 (HYTHSEAQFGKSE) lie on the Extracellular side of the membrane. A helical transmembrane segment spans residues 225 to 245 (LALSRFSSCIMLVAYASYLYF). At 246-286 (QLSNNRRRNEANVYPCMPLIKRRIQDDVDGNDDEVPEISKR) the chain is on the cytoplasmic side. A helical membrane pass occupies residues 287 to 307 (EAISWIAIFIAWISMLSYYLV). At 308 to 318 (DAIDGASKAWN) the chain is on the extracellular side. Residues 319 to 339 (IPVAFISVVLLPVVGNSAGHA) form a helical membrane-spanning segment. Residues 333 to 368 (GNSAGHANAVMFAVKDKLDISLGVAIGSSIQISMFG) form a cation selection region. The Cytoplasmic segment spans residues 340–353 (NAVMFAVKDKLDIS). A helical transmembrane segment spans residues 354–374 (LGVAIGSSIQISMFGIPFCVV). Residues 375–384 (MGWMMGKPMD) are Extracellular-facing. The chain crosses the membrane as a helical span at residues 385 to 405 (LNFHLFETASLLTTVLVVAFL). The Cytoplasmic segment spans residues 406–413 (LQDGTSNC). Residues 414–434 (VKGLMLFLCYLIVAASFYVHA) form a helical membrane-spanning segment. Residues 435–447 (DPNSKASEKPPQN) are Extracellular-facing.

Belongs to the Ca(2+):cation antiporter (CaCA) (TC 2.A.19) family. Cation/proton exchanger (CAX) subfamily.

It localises to the vacuole membrane. In terms of biological role, vacuolar cation/proton exchanger (CAX). Translocates Ca(2+) and other metal ions into vacuoles using the proton gradient formed by H(+)-ATPase and H(+)-pyrophosphatase. This is Putative vacuolar cation/proton exchanger 4 from Oryza sativa subsp. japonica (Rice).